Consider the following 346-residue polypeptide: 3',5'-cyclic-nucleotide phosphodiesterase (346 aa).

Belongs to the cyclic nucleotide phosphodiesterase class-II family.

It catalyses the reaction a nucleoside 3',5'-cyclic phosphate + H2O = a nucleoside 5'-phosphate + H(+). This is 3',5'-cyclic-nucleotide phosphodiesterase (cgs2) from Schizosaccharomyces pombe (strain 972 / ATCC 24843) (Fission yeast).